A 23-amino-acid chain; its full sequence is MQRPRPPRPLSYSRSSEEAFLEA.

The segment at 1 to 23 (MQRPRPPRPLSYSRSSEEAFLEA) is disordered.

The protein belongs to the polyomavirus early leader protein family.

Its function is as follows. May play a role in the lytic cycle. The protein is SV40 early leader protein of Macaca (macaques).